We begin with the raw amino-acid sequence, 207 residues long: Large ribosomal subunit protein uL4 (207 aa).

Residues 58–78 are disordered; that stretch reads AGGGKKPWRQKGTGRARHGSI. Residues 63-77 are compositionally biased toward basic residues; it reads KPWRQKGTGRARHGS.

Belongs to the universal ribosomal protein uL4 family. In terms of assembly, part of the 50S ribosomal subunit.

One of the primary rRNA binding proteins, this protein initially binds near the 5'-end of the 23S rRNA. It is important during the early stages of 50S assembly. It makes multiple contacts with different domains of the 23S rRNA in the assembled 50S subunit and ribosome. Its function is as follows. Forms part of the polypeptide exit tunnel. This Aster yellows witches'-broom phytoplasma (strain AYWB) protein is Large ribosomal subunit protein uL4.